The following is a 209-amino-acid chain: Xanthine phosphoribosyltransferase 1 (209 aa).

A Phosphoserine modification is found at serine 79.

It is found in the cytoplasm. In terms of biological role, may act as a xanthine phosphoribosyltransferase involved in the synthesis of purine nucleotides. Such activity is however unclear in vivo. This Saccharomyces cerevisiae (strain ATCC 204508 / S288c) (Baker's yeast) protein is Xanthine phosphoribosyltransferase 1 (XPT1).